The following is a 269-amino-acid chain: MKPFKTSWADEVEADYVDGLPPCSEYIEGDYKYVTEYKFNDDGKKVKVVRTFKIEKQVVSKAVARRRGWVKFGDSRLDKPGPNSQTTMASEEIFMLFMGSKEFEQTHETQMDAGKNIAKCRICNGEHWSVNCPYKGTSMDSKTLMESKANAAAAAALNDPSKPGKYVPPFMKDGAGGAGGKGRERDDSSAVRISNLSESMTETDLEELVKKIGPHTKMYLAREKNTGLCKGFAYVHFKFRQDAAAAIEILNGHGYDHLILCVEWSKPQP.

Residues 189-267 (SAVRISNLSE…LILCVEWSKP (79 aa)) enclose the RRM domain.

It belongs to the eIF-3 subunit G family. As to quaternary structure, component of the eukaryotic translation initiation factor 3 (eIF-3) complex. The eIF-3 complex interacts with pix.

Its subcellular location is the cytoplasm. Its function is as follows. RNA-binding component of the eukaryotic translation initiation factor 3 (eIF-3) complex, which is involved in protein synthesis of a specialized repertoire of mRNAs and, together with other initiation factors, stimulates binding of mRNA and methionyl-tRNAi to the 40S ribosome. The eIF-3 complex specifically targets and initiates translation of a subset of mRNAs involved in cell proliferation. This subunit can bind 18S rRNA. The protein is Eukaryotic translation initiation factor 3 subunit G-2 of Drosophila ananassae (Fruit fly).